We begin with the raw amino-acid sequence, 473 residues long: Protein TED1 (473 aa).

Topologically, residues 1-8 are cytoplasmic; that stretch reads MLRCAVKK. Residues 9-29 form a helical membrane-spanning segment; the sequence is FAYFATFLTIVANIYIYTYPS. Residues 30 to 451 are Lumenal-facing; that stretch reads FHPEQCSWNC…FSLCPFAIQH (422 aa). N38, N147, N229, N266, and N307 each carry an N-linked (GlcNAc...) asparagine glycan. Residues 452-472 form a helical membrane-spanning segment; the sequence is VWWFAKVSLLVTIFTWSSLLF. Residue V473 is a topological domain, cytoplasmic.

N-glycosylated.

The protein resides in the endoplasmic reticulum membrane. Its function is as follows. Acts together with EMP24 and ERV25 in cargo exit from the endoplasmic reticulum. This is Protein TED1 (TED1) from Saccharomyces cerevisiae (strain ATCC 204508 / S288c) (Baker's yeast).